The chain runs to 300 residues: Bifunctional protein FolD 1 (300 aa).

NADP(+) is bound by residues 166–168, S191, and I232; that span reads GRS.

The protein belongs to the tetrahydrofolate dehydrogenase/cyclohydrolase family. Homodimer.

It catalyses the reaction (6R)-5,10-methylene-5,6,7,8-tetrahydrofolate + NADP(+) = (6R)-5,10-methenyltetrahydrofolate + NADPH. The catalysed reaction is (6R)-5,10-methenyltetrahydrofolate + H2O = (6R)-10-formyltetrahydrofolate + H(+). It functions in the pathway one-carbon metabolism; tetrahydrofolate interconversion. Catalyzes the oxidation of 5,10-methylenetetrahydrofolate to 5,10-methenyltetrahydrofolate and then the hydrolysis of 5,10-methenyltetrahydrofolate to 10-formyltetrahydrofolate. This Roseobacter denitrificans (strain ATCC 33942 / OCh 114) (Erythrobacter sp. (strain OCh 114)) protein is Bifunctional protein FolD 1.